The primary structure comprises 372 residues: Anhydro-N-acetylmuramic acid kinase (372 aa).

Residue 12-19 (GTSMDALD) coordinates ATP.

This sequence belongs to the anhydro-N-acetylmuramic acid kinase family.

It catalyses the reaction 1,6-anhydro-N-acetyl-beta-muramate + ATP + H2O = N-acetyl-D-muramate 6-phosphate + ADP + H(+). It functions in the pathway amino-sugar metabolism; 1,6-anhydro-N-acetylmuramate degradation. The protein operates within cell wall biogenesis; peptidoglycan recycling. Its function is as follows. Catalyzes the specific phosphorylation of 1,6-anhydro-N-acetylmuramic acid (anhMurNAc) with the simultaneous cleavage of the 1,6-anhydro ring, generating MurNAc-6-P. Is required for the utilization of anhMurNAc either imported from the medium or derived from its own cell wall murein, and thus plays a role in cell wall recycling. This is Anhydro-N-acetylmuramic acid kinase from Coxiella burnetii (strain CbuK_Q154) (Coxiella burnetii (strain Q154)).